The following is a 208-amino-acid chain: Receptor expression-enhancing protein 6 (208 aa).

Helical transmembrane passes span 49–69 (GAFL…GFVY), 93–113 (WVIY…LHWF), and 115–135 (FYYV…SWNG). A disordered region spans residues 187–208 (VGPAESEPRSLPSSAHTEPTVD). Positions 197–208 (LPSSAHTEPTVD) are enriched in polar residues.

The protein belongs to the DP1 family.

Its subcellular location is the endoplasmic reticulum membrane. It is found in the cytoplasmic vesicle. The protein localises to the clathrin-coated vesicle membrane. Its function is as follows. Required correct function and survival of retinal photoreceptors. Required for retinal development. In rod photoreceptors, facilitates stability and/or trafficking of guanylate cyclases and is required to maintain endoplasmic reticulum and mitochondrial homeostasis. May play a role in clathrin-coated intracellular vesicle trafficking of proteins from the endoplasmic reticulum to the retinal rod plasma membrane. The protein is Receptor expression-enhancing protein 6 of Danio rerio (Zebrafish).